Reading from the N-terminus, the 225-residue chain is Probable iron export ATP-binding protein FetA (225 aa).

Residues 8–225 form the ABC transporter domain; the sequence is LQLQNVGYLA…EMQEARYELA (218 aa). An ATP-binding site is contributed by 40–47; sequence GPSGCGKS.

Belongs to the ABC transporter superfamily. The complex is composed of two ATP-binding proteins (FetA) and two transmembrane proteins (FetB).

Its subcellular location is the cell inner membrane. Its function is as follows. Part of the ABC transporter complex FetAB, which is probably involved in iron export and enhances resistance to H(2)O(2)-mediated oxidative stress. Probably responsible for energy coupling to the transport system. In Escherichia coli (strain K12), this protein is Probable iron export ATP-binding protein FetA (fetA).